The sequence spans 463 residues: Argininosuccinate lyase (463 aa).

Belongs to the lyase 1 family. Argininosuccinate lyase subfamily.

The protein resides in the cytoplasm. It carries out the reaction 2-(N(omega)-L-arginino)succinate = fumarate + L-arginine. The protein operates within amino-acid biosynthesis; L-arginine biosynthesis; L-arginine from L-ornithine and carbamoyl phosphate: step 3/3. The polypeptide is Argininosuccinate lyase (Thiobacillus denitrificans (strain ATCC 25259 / T1)).